Reading from the N-terminus, the 507-residue chain is ESX-5 secretion system ATPase EccB5 (507 aa).

Residues 56 to 76 form a helical membrane-spanning segment; sequence VVASVSAALVICLGSLLWSFI.

Belongs to the EccB family. In terms of assembly, part of the ESX-5 / type VII secretion system (T7SS), which is composed of cytosolic and membrane components. The ESX-5 membrane complex is composed of EccB5, EccC5, EccD5 and EccE5.

It is found in the cell inner membrane. Functionally, an ATPase. Part of the ESX-5 specialized secretion system, which is responsible for the secretion of EsxN and a number of PE_PGRS and PPE proteins. This is ESX-5 secretion system ATPase EccB5 from Mycobacterium marinum (strain ATCC BAA-535 / M).